A 136-amino-acid chain; its full sequence is Large ribosomal subunit protein eL27 (136 aa).

Belongs to the eukaryotic ribosomal protein eL27 family.

The sequence is that of Large ribosomal subunit protein eL27 (RPL27) from Candida albicans (Yeast).